Consider the following 217-residue polypeptide: Probable nicotinate-nucleotide adenylyltransferase (217 aa).

Belongs to the NadD family.

It carries out the reaction nicotinate beta-D-ribonucleotide + ATP + H(+) = deamido-NAD(+) + diphosphate. Its pathway is cofactor biosynthesis; NAD(+) biosynthesis; deamido-NAD(+) from nicotinate D-ribonucleotide: step 1/1. Catalyzes the reversible adenylation of nicotinate mononucleotide (NaMN) to nicotinic acid adenine dinucleotide (NaAD). The polypeptide is Probable nicotinate-nucleotide adenylyltransferase (Moorella thermoacetica (strain ATCC 39073 / JCM 9320)).